A 497-amino-acid chain; its full sequence is ATP-dependent RNA helicase CshA (497 aa).

Positions 1–29 (MKFSELGLSDSLLKAIKRSGYEEATPIQE) match the Q motif motif. In terms of domain architecture, Helicase ATP-binding spans 32-202 (IPMVLEGKDV…VQFMSDPETV (171 aa)). Position 45-52 (45-52 (AQTGTGKT)) interacts with ATP. Positions 150 to 153 (DEAD) match the DEAD box motif. The Helicase C-terminal domain occupies 228-373 (DIMTRLIDVQ…PLKPPTAEEA (146 aa)). The interval 425–497 (AASEVPVKIT…SFNIRHRKEN (73 aa)) is disordered. The span at 448–458 (RNGNRNNSHGG) shows a compositional bias: low complexity. Basic residues-rich tracts occupy residues 459-473 (NHYR…QHGS) and 481-497 (KSHS…RKEN).

It belongs to the DEAD box helicase family. CshA subfamily. As to quaternary structure, oligomerizes, may be a member of the RNA degradosome.

It is found in the cytoplasm. The protein localises to the cell membrane. It catalyses the reaction ATP + H2O = ADP + phosphate + H(+). Its function is as follows. DEAD-box RNA helicase possibly involved in RNA degradation. Unwinds dsRNA in both 5'- and 3'-directions, has RNA-dependent ATPase activity. Over-expression leads to cell aggregation. This is ATP-dependent RNA helicase CshA from Limosilactobacillus reuteri (Lactobacillus reuteri).